The chain runs to 346 residues: Methylthioribose-1-phosphate isomerase (346 aa).

Substrate-binding positions include 54-56 (RGA), Arg91, and Gln192. Asp233 functions as the Proton donor in the catalytic mechanism. 243–244 (NK) provides a ligand contact to substrate.

The protein belongs to the eIF-2B alpha/beta/delta subunits family. MtnA subfamily.

The enzyme catalyses 5-(methylsulfanyl)-alpha-D-ribose 1-phosphate = 5-(methylsulfanyl)-D-ribulose 1-phosphate. The protein operates within amino-acid biosynthesis; L-methionine biosynthesis via salvage pathway; L-methionine from S-methyl-5-thio-alpha-D-ribose 1-phosphate: step 1/6. Catalyzes the interconversion of methylthioribose-1-phosphate (MTR-1-P) into methylthioribulose-1-phosphate (MTRu-1-P). The chain is Methylthioribose-1-phosphate isomerase from Yersinia pseudotuberculosis serotype O:1b (strain IP 31758).